The chain runs to 131 residues: Small ribosomal subunit protein uS8 (131 aa).

It belongs to the universal ribosomal protein uS8 family. Part of the 30S ribosomal subunit. Contacts proteins S5 and S12.

In terms of biological role, one of the primary rRNA binding proteins, it binds directly to 16S rRNA central domain where it helps coordinate assembly of the platform of the 30S subunit. The chain is Small ribosomal subunit protein uS8 from Porphyromonas gingivalis (strain ATCC 33277 / DSM 20709 / CIP 103683 / JCM 12257 / NCTC 11834 / 2561).